A 146-amino-acid chain; its full sequence is MTKRIEEKIEGVIESLGYLLYDVSLVKENEHNILRVSLKNPNGAVSLDICQQVSEIISPLLDVCDFIQDAYILEVSSMGLERVLKTPKHFKLSLGEKVEVKLTNKESFQAVLKDANDWSADFELENHAIKSVEYKDLKKVKTLFEW.

The protein belongs to the RimP family.

It is found in the cytoplasm. Its function is as follows. Required for maturation of 30S ribosomal subunits. The polypeptide is Ribosome maturation factor RimP (Helicobacter pylori (strain P12)).